A 221-amino-acid polypeptide reads, in one-letter code: Histidine biosynthesis bifunctional protein HisIE (221 aa).

Residues 1 to 129 form a phosphoribosyl-AMP cyclohydrolase region; the sequence is MAYSKNFSIE…AKKTSPFSNI (129 aa). The interval 130–221 is phosphoribosyl-ATP pyrophosphohydrolase; the sequence is CSELFDTLHE…VLESRRGKNN (92 aa).

This sequence in the N-terminal section; belongs to the PRA-CH family. It in the C-terminal section; belongs to the PRA-PH family.

Its subcellular location is the cytoplasm. The enzyme catalyses 1-(5-phospho-beta-D-ribosyl)-ATP + H2O = 1-(5-phospho-beta-D-ribosyl)-5'-AMP + diphosphate + H(+). It catalyses the reaction 1-(5-phospho-beta-D-ribosyl)-5'-AMP + H2O = 1-(5-phospho-beta-D-ribosyl)-5-[(5-phospho-beta-D-ribosylamino)methylideneamino]imidazole-4-carboxamide. It functions in the pathway amino-acid biosynthesis; L-histidine biosynthesis; L-histidine from 5-phospho-alpha-D-ribose 1-diphosphate: step 2/9. The protein operates within amino-acid biosynthesis; L-histidine biosynthesis; L-histidine from 5-phospho-alpha-D-ribose 1-diphosphate: step 3/9. The chain is Histidine biosynthesis bifunctional protein HisIE from Prochlorococcus marinus subsp. pastoris (strain CCMP1986 / NIES-2087 / MED4).